A 450-amino-acid chain; its full sequence is Probable ECA polymerase (450 aa).

A run of 11 helical transmembrane segments spans residues 6 to 26, 37 to 57, 63 to 83, 118 to 138, 155 to 175, 181 to 201, 207 to 227, 228 to 248, 341 to 361, 378 to 398, and 410 to 430; these read FSGL…LTWF, VFFS…TSVL, VGVA…CFYA, VILM…NGFL, GVAL…VYFL, AWLF…MIVG, IIIA…ISLW, MLAA…LKRY, LVVM…GLII, YKAA…IVLA, and VFFI…YWLF.

Belongs to the WzyE family. Probably part of a complex composed of WzxE, WzyE and WzzE.

Its subcellular location is the cell inner membrane. It functions in the pathway bacterial outer membrane biogenesis; enterobacterial common antigen biosynthesis. Its function is as follows. Probably involved in the polymerization of enterobacterial common antigen (ECA) trisaccharide repeat units. The polypeptide is Probable ECA polymerase (Shigella sonnei (strain Ss046)).